The following is a 171-amino-acid chain: Protein-export protein SecB (171 aa).

This sequence belongs to the SecB family. Homotetramer, a dimer of dimers. One homotetramer interacts with 1 SecA dimer.

It is found in the cytoplasm. One of the proteins required for the normal export of preproteins out of the cell cytoplasm. It is a molecular chaperone that binds to a subset of precursor proteins, maintaining them in a translocation-competent state. It also specifically binds to its receptor SecA. The protein is Protein-export protein SecB of Jannaschia sp. (strain CCS1).